We begin with the raw amino-acid sequence, 562 residues long: MLKQSNERRWSLSYKPWSTPETEDVPNTGSNQHRRSICSLGARTGSQASIAPQWTEGNYNYYIEEDEDCGEEGEDWKDDLAEENQKAECLTSLLDGHNDTPAQMSTLKVNVGGHSYLLECCELANYPKTRLGRLATSTTRRGQLGLCDDYEAQTDEYFFDRDPAVFQLIYNFYTSGVLLVRDELCPRSFLEELGYWGVRLKYTPRCCRICFEERRDELSEQLKIQRELRAQAQAEEAEELFRDMRFYGPQRQRLWNLMEKPFSSVAAKAMGVATNLFVLISVVALALNTVEEMQHQAEQGTGGGDPRPILEHVEMLCVAFFTLEFLLRLASTPNLQRFARSALNLVDLVAILPFYLQLLLECFTSEDQRHNKDSPREHDLETVGRVGKVGQVLRIMRLMRIFRILKLARHSTGLRAFGFTLRQCYQQVGCLMLFITMGIFSFSAAVYSVEHDVPGTNFTSILHAWWWAAVSISTVGYGDMYPETHLGRLFAFLCIAFGIILNGMPISILYNKFSDYYSKLKAYEYTAIRRERGKVNFMQRATKKMAECLSESHAQSTTRQEN.

Positions 1 to 10 are enriched in basic and acidic residues; it reads MLKQSNERRW. The tract at residues 1–34 is disordered; the sequence is MLKQSNERRWSLSYKPWSTPETEDVPNTGSNQHR. The Cytoplasmic segment spans residues 1–163; sequence MLKQSNERRW…TDEYFFDRDP (163 aa). Residues 164-184 form a helical membrane-spanning segment; sequence AVFQLIYNFYTSGVLLVRDEL. At 185–269 the chain is on the extracellular side; sequence CPRSFLEELG…KPFSSVAAKA (85 aa). The chain crosses the membrane as a helical span at residues 270-290; the sequence is MGVATNLFVLISVVALALNTV. The Cytoplasmic portion of the chain corresponds to 291 to 344; sequence EEMQHQAEQGTGGGDPRPILEHVEMLCVAFFTLEFLLRLASTPNLQRFARSALN. Residues 345–365 form a helical membrane-spanning segment; it reads LVDLVAILPFYLQLLLECFTS. The Extracellular segment spans residues 366–391; it reads EDQRHNKDSPREHDLETVGRVGKVGQ. A helical; Voltage-sensor transmembrane segment spans residues 392–412; that stretch reads VLRIMRLMRIFRILKLARHST. The Cytoplasmic segment spans residues 413 to 427; the sequence is GLRAFGFTLRQCYQQ. Residues 428–448 traverse the membrane as a helical segment; sequence VGCLMLFITMGIFSFSAAVYS. Residues 449–461 are Extracellular-facing; it reads VEHDVPGTNFTSI. An N-linked (GlcNAc...) asparagine glycan is attached at Asn457. An intramembrane region (pore-forming) is located at residues 462 to 482; that stretch reads LHAWWWAAVSISTVGYGDMYP. The Selectivity filter motif lies at 474–479; it reads TVGYGD. Over 483–488 the chain is Extracellular; sequence ETHLGR. The chain crosses the membrane as a helical span at residues 489–509; sequence LFAFLCIAFGIILNGMPISIL. Over 510–562 the chain is Cytoplasmic; it reads YNKFSDYYSKLKAYEYTAIRRERGKVNFMQRATKKMAECLSESHAQSTTRQEN.

Belongs to the potassium channel family. V (TC 1.A.1.2) subfamily. Kv8.2/KCNV2 sub-subfamily. In terms of assembly, heteromultimer with KCNB1, KCNC1 and KCNF1. Does not form homomultimers.

Its subcellular location is the cell membrane. In terms of biological role, potassium channel subunit. Modulates channel activity by shifting the threshold and the half-maximal activation to more negative values. The sequence is that of Potassium voltage-gated channel subfamily V member 2 (Kcnv2) from Mus musculus (Mouse).